An 82-amino-acid polypeptide reads, in one-letter code: Small ribosomal subunit protein bS16 (82 aa).

The protein belongs to the bacterial ribosomal protein bS16 family.

In Haemophilus ducreyi (strain 35000HP / ATCC 700724), this protein is Small ribosomal subunit protein bS16.